A 326-amino-acid chain; its full sequence is Beta-ketoacyl-[acyl-carrier-protein] synthase III (326 aa).

Active-site residues include C120 and H253. The tract at residues 254-258 is ACP-binding; that stretch reads QANIR. Residue N283 is part of the active site.

This sequence belongs to the thiolase-like superfamily. FabH family. In terms of assembly, homodimer.

The protein resides in the cytoplasm. It carries out the reaction malonyl-[ACP] + acetyl-CoA + H(+) = 3-oxobutanoyl-[ACP] + CO2 + CoA. It functions in the pathway lipid metabolism; fatty acid biosynthesis. Its function is as follows. Catalyzes the condensation reaction of fatty acid synthesis by the addition to an acyl acceptor of two carbons from malonyl-ACP. Catalyzes the first condensation reaction which initiates fatty acid synthesis and may therefore play a role in governing the total rate of fatty acid production. Possesses both acetoacetyl-ACP synthase and acetyl transacylase activities. Its substrate specificity determines the biosynthesis of branched-chain and/or straight-chain of fatty acids. The polypeptide is Beta-ketoacyl-[acyl-carrier-protein] synthase III (Cupriavidus pinatubonensis (strain JMP 134 / LMG 1197) (Cupriavidus necator (strain JMP 134))).